A 679-amino-acid chain; its full sequence is Methionine--tRNA ligase (679 aa).

Residues 12 to 22 (PYANGPIHIGH) carry the 'HIGH' region motif. Zn(2+)-binding residues include Cys-143, Cys-146, Cys-156, and Cys-158. Residues 328–332 (KMSKS) carry the 'KMSKS' region motif. Residue Lys-331 coordinates ATP. Residues 537–564 (MMEESKDEAAQETGAAATNPFNDSDQPL) form a disordered region. A tRNA-binding domain is found at 577–679 (DFMKVDLRVA…EGALPGQRVH (103 aa)).

It belongs to the class-I aminoacyl-tRNA synthetase family. MetG type 1 subfamily. As to quaternary structure, homodimer. Zn(2+) is required as a cofactor.

It is found in the cytoplasm. The enzyme catalyses tRNA(Met) + L-methionine + ATP = L-methionyl-tRNA(Met) + AMP + diphosphate. Functionally, is required not only for elongation of protein synthesis but also for the initiation of all mRNA translation through initiator tRNA(fMet) aminoacylation. The protein is Methionine--tRNA ligase of Rhodopirellula baltica (strain DSM 10527 / NCIMB 13988 / SH1).